A 568-amino-acid chain; its full sequence is Periplasmic pectate lyase (568 aa).

A signal peptide spans 1–19; it reads MKRFALSLLAGLVALQASA.

This sequence belongs to the polysaccharide lyase 2 family.

Its subcellular location is the periplasm. The catalysed reaction is Eliminative cleavage of (1-&gt;4)-alpha-D-galacturonan to give oligosaccharides with 4-deoxy-alpha-D-galact-4-enuronosyl groups at their non-reducing ends.. The protein operates within glycan metabolism; pectin degradation; 2-dehydro-3-deoxy-D-gluconate from pectin: step 2/5. The protein is Periplasmic pectate lyase (pelB) of Pectobacterium carotovorum subsp. carotovorum (Erwinia carotovora subsp. carotovora).